Reading from the N-terminus, the 941-residue chain is Glycine dehydrogenase (decarboxylating) (941 aa).

Lys-692 carries the post-translational modification N6-(pyridoxal phosphate)lysine.

The protein belongs to the GcvP family. The glycine cleavage system is composed of four proteins: P, T, L and H. Pyridoxal 5'-phosphate is required as a cofactor.

The enzyme catalyses N(6)-[(R)-lipoyl]-L-lysyl-[glycine-cleavage complex H protein] + glycine + H(+) = N(6)-[(R)-S(8)-aminomethyldihydrolipoyl]-L-lysyl-[glycine-cleavage complex H protein] + CO2. The glycine cleavage system catalyzes the degradation of glycine. The P protein binds the alpha-amino group of glycine through its pyridoxal phosphate cofactor; CO(2) is released and the remaining methylamine moiety is then transferred to the lipoamide cofactor of the H protein. This Mycobacterium bovis (strain ATCC BAA-935 / AF2122/97) protein is Glycine dehydrogenase (decarboxylating).